The primary structure comprises 275 residues: NH(3)-dependent NAD(+) synthetase (275 aa).

46–53 (GISGGQDS) serves as a coordination point for ATP. Asp-52 serves as a coordination point for Mg(2+). Arg-141 contributes to the deamido-NAD(+) binding site. Position 161 (Thr-161) interacts with ATP. Glu-166 provides a ligand contact to Mg(2+). The deamido-NAD(+) site is built by Lys-174 and Asp-181. ATP-binding residues include Lys-190 and Thr-212. Deamido-NAD(+) is bound at residue 261-262 (HK).

This sequence belongs to the NAD synthetase family. As to quaternary structure, homodimer.

The enzyme catalyses deamido-NAD(+) + NH4(+) + ATP = AMP + diphosphate + NAD(+) + H(+). It participates in cofactor biosynthesis; NAD(+) biosynthesis; NAD(+) from deamido-NAD(+) (ammonia route): step 1/1. Catalyzes the ATP-dependent amidation of deamido-NAD to form NAD. Uses ammonia as a nitrogen source. In Limosilactobacillus reuteri (strain DSM 20016) (Lactobacillus reuteri), this protein is NH(3)-dependent NAD(+) synthetase.